The chain runs to 201 residues: Nucleoid occlusion factor SlmA (201 aa).

Residues 14 to 75 (KERQQQVLEV…ALIERIEMTL (62 aa)) form the HTH tetR-type domain. Positions 38 to 57 (TTERLSKAVGVSEGALYRYF) form a DNA-binding region, H-T-H motif.

This sequence belongs to the nucleoid occlusion factor SlmA family. Homodimer. Interacts with FtsZ.

Its subcellular location is the cytoplasm. The protein localises to the nucleoid. Functionally, required for nucleoid occlusion (NO) phenomenon, which prevents Z-ring formation and cell division over the nucleoid. Acts as a DNA-associated cell division inhibitor that binds simultaneously chromosomal DNA and FtsZ, and disrupts the assembly of FtsZ polymers. SlmA-DNA-binding sequences (SBS) are dispersed on non-Ter regions of the chromosome, preventing FtsZ polymerization at these regions. The sequence is that of Nucleoid occlusion factor SlmA from Glaesserella parasuis serovar 5 (strain SH0165) (Haemophilus parasuis).